The sequence spans 98 residues: MAAMQWCGAMTRRIMMTQRTSAALNCSARYSSLSPACAAPAVSEMDLCGRGDKKTKKGKRFKGSYGNSRGKKQKMIERIKDKLELPRSTPWPLPFKLI.

The transit peptide at 1–35 (MAAMQWCGAMTRRIMMTQRTSAALNCSARYSSLSP) directs the protein to the mitochondrion. A disordered region spans residues 52-71 (DKKTKKGKRFKGSYGNSRGK). Basic residues predominate over residues 53 to 62 (KKTKKGKRFK).

Belongs to the bacterial ribosomal protein bTHX family. Component of the mitochondrial ribosome small subunit.

The protein resides in the mitochondrion. The polypeptide is Small ribosomal subunit protein bTHXm (Arabidopsis thaliana (Mouse-ear cress)).